Consider the following 129-residue polypeptide: UPF0325 protein YPTS_3127 (129 aa).

This sequence belongs to the UPF0325 family.

The protein is UPF0325 protein YPTS_3127 of Yersinia pseudotuberculosis serotype IB (strain PB1/+).